The following is a 28-amino-acid chain: Caerulein precursor fragment B1 (28 aa).

It belongs to the gastrin/cholecystokinin family. In terms of tissue distribution, expressed by the skin glands.

It localises to the secreted. In terms of biological role, peptide CPF-B1: Has antimicrobial activity against Gram-negative bacteria E.coli ATCC 25922 (MIC=5 uM) and multidrug-resistant A.baumannii (MIC=4-8 uM), against Gram-positive bacteria S.aureus ATCC 25923 (MIC=5 uM) and methicillin-resistant S.aureus and against fungus C.albicans ATCC 90028 (MIC=25 uM). Has some hemolytic activity against human erythrocytes at high concentrations. The polypeptide is Caerulein precursor fragment B1 (Xenopus borealis (Kenyan clawed frog)).